We begin with the raw amino-acid sequence, 704 residues long: Matrix metalloproteinase-9 (704 aa).

Residues 1–19 (MSPRQPLVLVFLVLGCCSA) form the signal peptide. A propeptide spans 20–106 (APRPHKPTVV…PRCGVPDLGK (87 aa)) (activation peptide). Asparagine 38 carries an N-linked (GlcNAc...) asparagine glycan. The short motif at 97–104 (PRCGVPDL) is the Cysteine switch element. Cysteine 99 contributes to the Zn(2+) binding site. N-linked (GlcNAc...) asparagine glycosylation occurs at asparagine 127. Ca(2+) is bound by residues aspartate 131 and aspartate 165. The Zn(2+) site is built by histidine 175 and aspartate 177. Residues aspartate 182, glycine 183, asparagine 185, and leucine 187 each contribute to the Ca(2+) site. Histidine 190 serves as a coordination point for Zn(2+). The Ca(2+) site is built by glycine 197, glutamine 199, and aspartate 201. Position 203 (histidine 203) interacts with Zn(2+). Ca(2+) contacts are provided by aspartate 205, aspartate 206, and glutamate 208. Fibronectin type-II domains follow at residues 225–273 (ADGA…FCPS), 283–331 (GDGK…FCPT), and 342–390 (SAGE…FCPD). 6 disulfides stabilise this stretch: cysteine 230–cysteine 256, cysteine 244–cysteine 271, cysteine 288–cysteine 314, cysteine 302–cysteine 329, cysteine 347–cysteine 373, and cysteine 361–cysteine 388. A Zn(2+)-binding site is contributed by histidine 401. Residue glutamate 402 is part of the active site. Histidine 405 and histidine 411 together coordinate Zn(2+). The segment at 434-507 (DDVRGIQHLY…PSEAPTVPVD (74 aa)) is disordered. Pro residues-rich tracts occupy residues 450-461 (EPQPPTAPPTAP) and 483-496 (TGPPAAGPTGPPTA). A disulfide bridge links cysteine 513 with cysteine 701. Hemopexin repeat units lie at residues 515–560 (VNIF…WPAL), 561–605 (PRKL…GLGP), 607–654 (VTQV…YPGV), and 655–701 (PLNT…ILQC).

This sequence belongs to the peptidase M10A family. In terms of assembly, exists as monomer or homodimer; disulfide-linked. Also exists as heterodimer with LCN2. Macrophages and transformed cell lines produce only the monomeric form. Interacts with ECM1. It depends on Zn(2+) as a cofactor. Ca(2+) serves as cofactor. In terms of processing, N- and O-glycosylated.

The protein resides in the secreted. Its subcellular location is the extracellular space. It is found in the extracellular matrix. The catalysed reaction is Cleavage of gelatin types I and V and collagen types IV and V.. Functionally, matrix metalloproteinase that plays an essential role in local proteolysis of the extracellular matrix and in leukocyte migration. Could play a role in bone osteoclastic resorption. Cleaves KiSS1 at a Gly-|-Leu bond. Cleaves NINJ1 to generate the Secreted ninjurin-1 form. Cleaves type IV and type V collagen into large C-terminal three quarter fragments and shorter N-terminal one quarter fragments. Degrades fibronectin but not laminin or Pz-peptide. The sequence is that of Matrix metalloproteinase-9 (MMP9) from Canis lupus familiaris (Dog).